The following is a 331-amino-acid chain: tRNA uridine(34) hydroxylase (331 aa).

The Rhodanese domain occupies 123 to 217; it reads TDPEVLLIDT…YLEDVPQEES (95 aa). Residue Cys177 is the Cysteine persulfide intermediate of the active site. The interval 293–331 is disordered; it reads KSRGEEHIGSEAAKAIKKRQAEKKLKRKNYHQHLTQGAE. Residues 307–323 show a composition bias toward basic residues; sequence AIKKRQAEKKLKRKNYH.

The protein belongs to the TrhO family.

It catalyses the reaction uridine(34) in tRNA + AH2 + O2 = 5-hydroxyuridine(34) in tRNA + A + H2O. Functionally, catalyzes oxygen-dependent 5-hydroxyuridine (ho5U) modification at position 34 in tRNAs. This Hahella chejuensis (strain KCTC 2396) protein is tRNA uridine(34) hydroxylase.